The chain runs to 345 residues: Fructose-bisphosphate aldolase (345 aa).

S53 lines the D-glyceraldehyde 3-phosphate pocket. D95 (proton donor) is an active-site residue. Zn(2+)-binding residues include H96, D131, E161, and H212. Residue G213 coordinates dihydroxyacetone phosphate. Residue H252 coordinates Zn(2+). Dihydroxyacetone phosphate-binding positions include 253–255 (GGS) and 274–277 (NVDT).

This sequence belongs to the class II fructose-bisphosphate aldolase family. It depends on Zn(2+) as a cofactor.

The catalysed reaction is beta-D-fructose 1,6-bisphosphate = D-glyceraldehyde 3-phosphate + dihydroxyacetone phosphate. Its pathway is carbohydrate degradation; glycolysis; D-glyceraldehyde 3-phosphate and glycerone phosphate from D-glucose: step 4/4. In terms of biological role, catalyzes the aldol condensation of dihydroxyacetone phosphate (DHAP or glycerone-phosphate) with glyceraldehyde 3-phosphate (G3P) to form fructose 1,6-bisphosphate (FBP) in gluconeogenesis and the reverse reaction in glycolysis. The protein is Fructose-bisphosphate aldolase (fba) of Mycobacterium leprae (strain TN).